Consider the following 686-residue polypeptide: Probable metal-nicotianamine transporter YSL10 (686 aa).

Helical transmembrane passes span 36–56 (VTLR…VIVM), 60–80 (LTTG…FFLL), 109–129 (CVVA…IFAM), 151–171 (LGWM…SVVP), 212–232 (MLGK…FYTG), 271–291 (LVNI…WPLI), 316–336 (VFIS…KVMT), 383–403 (IPNW…IATV), 415–435 (VAVS…GCGL), 461–481 (GGII…STAS), 501–521 (FVSQ…VFWL), 556–576 (GSLP…AIAV), 597–617 (MAIP…GSLI), and 639–659 (GLIC…LAGV).

It belongs to the YSL (TC 2.A.67.2) family.

It is found in the membrane. Functionally, may be involved in the transport of nicotianamine-chelated metals. The polypeptide is Probable metal-nicotianamine transporter YSL10 (YSL10) (Oryza sativa subsp. japonica (Rice)).